An 828-amino-acid chain; its full sequence is Beta-galactosidase 13 (828 aa).

The signal sequence occupies residues 1 to 23 (MKTTMAAAATCLVALLVVVLAEA). A glycan (N-linked (GlcNAc...) asparagine) is linked at Asn-157. Glu-187 (proton donor) is an active-site residue. Residues Asn-198 and Asn-249 are each glycosylated (N-linked (GlcNAc...) asparagine). The active-site Nucleophile is the Glu-259. N-linked (GlcNAc...) asparagine glycosylation is found at Asn-260, Asn-362, Asn-366, Asn-392, Asn-502, Asn-578, Asn-586, and Asn-615. The SUEL-type lectin domain maps to 746-828 (AEVGDAITLS…SGVLTVQASC (83 aa)).

It belongs to the glycosyl hydrolase 35 family.

It localises to the secreted. Its subcellular location is the extracellular space. It is found in the apoplast. It catalyses the reaction Hydrolysis of terminal non-reducing beta-D-galactose residues in beta-D-galactosides.. The chain is Beta-galactosidase 13 from Oryza sativa subsp. japonica (Rice).